Consider the following 170-residue polypeptide: Urease accessory protein UreE (170 aa).

Belongs to the UreE family.

Its subcellular location is the cytoplasm. In terms of biological role, involved in urease metallocenter assembly. Binds nickel. Probably functions as a nickel donor during metallocenter assembly. This is Urease accessory protein UreE from Helicobacter pylori (strain Shi470).